The following is a 243-amino-acid chain: 23S rRNA (guanosine-2'-O-)-methyltransferase RlmB (243 aa).

S-adenosyl-L-methionine contacts are provided by G196, I216, and L225.

It belongs to the class IV-like SAM-binding methyltransferase superfamily. RNA methyltransferase TrmH family. RlmB subfamily. As to quaternary structure, homodimer.

Its subcellular location is the cytoplasm. The catalysed reaction is guanosine(2251) in 23S rRNA + S-adenosyl-L-methionine = 2'-O-methylguanosine(2251) in 23S rRNA + S-adenosyl-L-homocysteine + H(+). Specifically methylates the ribose of guanosine 2251 in 23S rRNA. This chain is 23S rRNA (guanosine-2'-O-)-methyltransferase RlmB, found in Salmonella typhi.